The chain runs to 144 residues: Benzoylsuccinyl-CoA thiolase subunit BbsA (144 aa).

Zn(2+) contacts are provided by cysteine 40, cysteine 43, cysteine 54, and cysteine 57.

The protein belongs to the BbsA family. Heterotetramer composed of two BbsA subunits and two BbsB subunits. BbsA forms homodimeric subcomplexes. Both BbsA and BbsB are essential for enzymatic activity.

The enzyme catalyses (S)-2-benzoylsuccinyl-CoA + CoA = benzoyl-CoA + succinyl-CoA. The protein operates within xenobiotic degradation; toluene degradation. Component of the BbsAB thiolase complex, which catalyzes the thiolytic cleavage of (S)-2-benzoylsuccinyl-CoA to succinyl-CoA and benzoyl-CoA, the final step of anaerobic toluene metabolism. The BbsA subunit critically contributes to an induced-fit process for productive binding of a CoA substrate into the active site of BbsB. This Thauera aromatica protein is Benzoylsuccinyl-CoA thiolase subunit BbsA.